The sequence spans 209 residues: N-(5'-phosphoribosyl)anthranilate isomerase (209 aa).

This sequence belongs to the TrpF family.

It carries out the reaction N-(5-phospho-beta-D-ribosyl)anthranilate = 1-(2-carboxyphenylamino)-1-deoxy-D-ribulose 5-phosphate. Its pathway is amino-acid biosynthesis; L-tryptophan biosynthesis; L-tryptophan from chorismate: step 3/5. The protein is N-(5'-phosphoribosyl)anthranilate isomerase of Granulibacter bethesdensis (strain ATCC BAA-1260 / CGDNIH1).